The primary structure comprises 360 residues: 3-dehydroquinate synthase (360 aa).

Residues 71–76 (DGEQYK), 105–109 (GVVGD), 129–130 (TT), Lys142, Lys151, and 169–172 (TLNT) contribute to the NAD(+) site. Zn(2+) is bound by residues Glu184, His248, and His265.

It belongs to the sugar phosphate cyclases superfamily. Dehydroquinate synthase family. The cofactor is Co(2+). Zn(2+) serves as cofactor. Requires NAD(+) as cofactor.

Its subcellular location is the cytoplasm. The catalysed reaction is 7-phospho-2-dehydro-3-deoxy-D-arabino-heptonate = 3-dehydroquinate + phosphate. It functions in the pathway metabolic intermediate biosynthesis; chorismate biosynthesis; chorismate from D-erythrose 4-phosphate and phosphoenolpyruvate: step 2/7. Functionally, catalyzes the conversion of 3-deoxy-D-arabino-heptulosonate 7-phosphate (DAHP) to dehydroquinate (DHQ). The sequence is that of 3-dehydroquinate synthase from Coxiella burnetii (strain CbuG_Q212) (Coxiella burnetii (strain Q212)).